A 243-amino-acid polypeptide reads, in one-letter code: Carboxy-S-adenosyl-L-methionine synthase (243 aa).

Residues tyrosine 39, 64–66 (GCS), 90–91 (DN), 118–119 (DL), asparagine 133, and arginine 200 each bind S-adenosyl-L-methionine.

The protein belongs to the class I-like SAM-binding methyltransferase superfamily. Cx-SAM synthase family. Homodimer.

It carries out the reaction prephenate + S-adenosyl-L-methionine = carboxy-S-adenosyl-L-methionine + 3-phenylpyruvate + H2O. In terms of biological role, catalyzes the conversion of S-adenosyl-L-methionine (SAM) to carboxy-S-adenosyl-L-methionine (Cx-SAM). In Idiomarina loihiensis (strain ATCC BAA-735 / DSM 15497 / L2-TR), this protein is Carboxy-S-adenosyl-L-methionine synthase.